Consider the following 33-residue polypeptide: Rugosin-B (33 aa).

Cysteines 27 and 33 form a disulfide.

The protein belongs to the frog skin active peptide (FSAP) family. Brevinin subfamily. Expressed by the skin glands.

Its subcellular location is the secreted. Functionally, shows antibacterial activity against both Gram-negative and Gram-positive bacteria. The sequence is that of Rugosin-B from Glandirana rugosa (Japanese wrinkled frog).